Reading from the N-terminus, the 53-residue chain is ENEDPFYYDYETVRNGGLIFAALAFIVGLVIILSKRFRCGAKKKHRQIPEDGL.

Residues 16-34 (GGLIFAALAFIVGLVIILS) traverse the membrane as a helical segment.

The protein belongs to the FXYD family. Regulatory subunit of the sodium/potassium-transporting ATPase which is composed of a catalytic alpha subunit, an auxiliary non-catalytic beta subunit and an additional regulatory subunit. In terms of processing, the N-terminus is blocked. As to expression, highest levels expressed in the kidney and spleen. Restricted to the basolateral membrane in renal epithelial cells and varies in its level of expression along the nephron.

Its subcellular location is the membrane. May be involved in forming the receptor site for cardiac glycoside binding or may modulate the transport function of the sodium ATPase. This is Sodium/potassium-transporting ATPase subunit gamma (FXYD2) from Ovis aries (Sheep).